The sequence spans 491 residues: Cytochrome P450 2H1 (491 aa).

Cys436 contacts heme.

It belongs to the cytochrome P450 family. It depends on heme as a cofactor. As to expression, expressed in liver.

Its subcellular location is the endoplasmic reticulum membrane. It localises to the microsome membrane. The catalysed reaction is an organic molecule + reduced [NADPH--hemoprotein reductase] + O2 = an alcohol + oxidized [NADPH--hemoprotein reductase] + H2O + H(+). In terms of biological role, cytochromes P450 are a group of heme-thiolate monooxygenases. In liver microsomes, this enzyme is involved in an NADPH-dependent electron transport pathway. It oxidizes a variety of structurally unrelated compounds, including steroids, fatty acids, and xenobiotics. The chain is Cytochrome P450 2H1 (CYP2H1) from Gallus gallus (Chicken).